The sequence spans 496 residues: Membrane-bound lytic murein transglycosylase F (496 aa).

The first 31 residues, 1–31, serve as a signal peptide directing secretion; it reads MPIFSTRVLTYLRCIFRLFIGLMLLLTLVGC. The segment at 32 to 271 is non-LT domain; it reads DFYTPSSQLE…KLDEKYFGHV (240 aa). Residues 273–496 form an LT domain region; that stretch reads NFDFVDTRTF…AEVVKQITLR (224 aa). Glu316 is a catalytic residue. Positions 464–485 are disordered; it reads HRREELDEDDSSEPQSTERPTV.

The protein in the N-terminal section; belongs to the bacterial solute-binding protein 3 family. This sequence in the C-terminal section; belongs to the transglycosylase Slt family.

The protein localises to the cell outer membrane. It carries out the reaction Exolytic cleavage of the (1-&gt;4)-beta-glycosidic linkage between N-acetylmuramic acid (MurNAc) and N-acetylglucosamine (GlcNAc) residues in peptidoglycan, from either the reducing or the non-reducing ends of the peptidoglycan chains, with concomitant formation of a 1,6-anhydrobond in the MurNAc residue.. Its function is as follows. Murein-degrading enzyme that degrades murein glycan strands and insoluble, high-molecular weight murein sacculi, with the concomitant formation of a 1,6-anhydromuramoyl product. Lytic transglycosylases (LTs) play an integral role in the metabolism of the peptidoglycan (PG) sacculus. Their lytic action creates space within the PG sacculus to allow for its expansion as well as for the insertion of various structures such as secretion systems and flagella. This chain is Membrane-bound lytic murein transglycosylase F, found in Aeromonas salmonicida (strain A449).